Consider the following 253-residue polypeptide: POU Class 2 homeobox-associating factor 3 (253 aa).

The 23-residue stretch at 5–27 (PKVYQGVRVKMTVKELLQQRRAH) folds into the OCA domain.

The protein belongs to the POU2AF family. Interacts with POU2F3 in a DNA-dependent manner; this interaction increases POU2F3 transactivation activity. Expressed in tuft cells.

It is found in the cytoplasm. Its subcellular location is the nucleus. Transcriptional coactivator that specifically associates with POU2F3. This complex drives the development of tuft cells, a rare a rare chemosensory cells that coordinate immune and neural functions within mucosal epithelial tissues. In Mus musculus (Mouse), this protein is POU Class 2 homeobox-associating factor 3.